A 474-amino-acid chain; its full sequence is Trehalose-6-phosphate synthase (474 aa).

A D-glucose 6-phosphate-binding site is contributed by Arg10. 22 to 23 contributes to the UDP-alpha-D-glucose binding site; the sequence is GG. Tyr77 and Asp131 together coordinate D-glucose 6-phosphate. UDP-alpha-D-glucose contacts are provided by Arg263 and Lys268. Arg301 lines the D-glucose 6-phosphate pocket. UDP-alpha-D-glucose contacts are provided by residues Phe340 and 366-370; that span reads LVAKE.

It belongs to the glycosyltransferase 20 family. Homotetramer.

The catalysed reaction is D-glucose 6-phosphate + UDP-alpha-D-glucose = alpha,alpha-trehalose 6-phosphate + UDP + H(+). Its pathway is glycan biosynthesis; trehalose biosynthesis. Functionally, probably involved in the osmoprotection via the biosynthesis of trehalose. Catalyzes the transfer of glucose from UDP-alpha-D-glucose (UDP-Glc) to D-glucose 6-phosphate (Glc-6-P) to form trehalose-6-phosphate. Acts with retention of the anomeric configuration of the UDP-sugar donor. This chain is Trehalose-6-phosphate synthase, found in Escherichia coli O157:H7.